The sequence spans 412 residues: Phosphoglycerate kinase 1 (412 aa).

Substrate contacts are provided by residues 28-30 (DFN), 65-68 (HQGR), arginine 122, and arginine 162. ATP is bound by residues glutamate 336 and 361-364 (GGHT).

This sequence belongs to the phosphoglycerate kinase family. In terms of assembly, monomer.

It is found in the cytoplasm. The enzyme catalyses (2R)-3-phosphoglycerate + ATP = (2R)-3-phospho-glyceroyl phosphate + ADP. The protein operates within carbohydrate degradation; glycolysis; pyruvate from D-glyceraldehyde 3-phosphate: step 2/5. The polypeptide is Phosphoglycerate kinase 1 (Methanosarcina acetivorans (strain ATCC 35395 / DSM 2834 / JCM 12185 / C2A)).